Here is a 454-residue protein sequence, read N- to C-terminus: Glutamyl-tRNA reductase (454 aa).

Residues 49–52, Ser-109, 114–116, and Gln-120 each bind substrate; these read TCNR and ETQ. Residue Cys-50 is the Nucleophile of the active site. 189–194 is a binding site for NADP(+); it reads GAGKMS. Residues 434–454 are disordered; the sequence is NDKNKQTSSSREQVLVSRFPD.

It belongs to the glutamyl-tRNA reductase family. In terms of assembly, homodimer.

It carries out the reaction (S)-4-amino-5-oxopentanoate + tRNA(Glu) + NADP(+) = L-glutamyl-tRNA(Glu) + NADPH + H(+). Its pathway is porphyrin-containing compound metabolism; protoporphyrin-IX biosynthesis; 5-aminolevulinate from L-glutamyl-tRNA(Glu): step 1/2. Catalyzes the NADPH-dependent reduction of glutamyl-tRNA(Glu) to glutamate 1-semialdehyde (GSA). The polypeptide is Glutamyl-tRNA reductase (Brevibacillus brevis (strain 47 / JCM 6285 / NBRC 100599)).